The following is an 854-amino-acid chain: Protein SEY1 homolog (854 aa).

Residues Met-1–Ser-724 are Cytoplasmic-facing. Residues Gly-49–Ser-291 form the GB1/RHD3-type G domain. Gly-59 to Ser-66 lines the GTP pocket. The stretch at Lys-336–Lys-386 forms a coiled coil. The helical transmembrane segment at Leu-725–Leu-745 threads the bilayer. Residues Thr-746–Pro-748 are Lumenal-facing. The chain crosses the membrane as a helical span at residues Ile-749 to Gln-769. Residues Leu-770–Asp-854 lie on the Cytoplasmic side of the membrane. Residues Gly-808–Asp-854 form a disordered region. Over residues Ser-822–Ser-839 the composition is skewed to low complexity. Over residues Cys-845–Asp-854 the composition is skewed to basic and acidic residues.

This sequence belongs to the TRAFAC class dynamin-like GTPase superfamily. GB1/RHD3 GTPase family. RHD3 subfamily.

The protein resides in the endoplasmic reticulum membrane. Its function is as follows. Probable GTP-binding protein that may be involved in cell development. This chain is Protein SEY1 homolog, found in Trypanosoma brucei brucei (strain 927/4 GUTat10.1).